The chain runs to 425 residues: Formyl-CoA:oxalate CoA-transferase (425 aa).

CoA contacts are provided by residues 17-18 (QS), arginine 38, 72-75 (LDTK), 96-98 (NFG), arginine 104, and 136-139 (KVYE). The active-site Nucleophile is aspartate 168. A substrate-binding site is contributed by 247 to 249 (GGQ).

Belongs to the CoA-transferase III family. Frc subfamily. As to quaternary structure, homodimer.

It carries out the reaction formyl-CoA + oxalate = oxalyl-CoA + formate. The protein operates within metabolic intermediate degradation; oxalate degradation; CO(2) and formate from oxalate: step 1/2. Involved in the catabolism of oxalate and in the adapatation to low pH via the induction of the oxalate-dependent acid tolerance response (ATR). Catalyzes the transfer of the CoA moiety from formyl-CoA to oxalate. The chain is Formyl-CoA:oxalate CoA-transferase from Bradyrhizobium sp. (strain ORS 278).